The sequence spans 572 residues: O-fucosyltransferase 16 (572 aa).

A helical; Signal-anchor for type II membrane protein membrane pass occupies residues 17-37 (LLPLVIAVSLSLLILFAFLSF). Residues Asn-92 and Asn-136 are each glycosylated (N-linked (GlcNAc...) asparagine). 274–276 (HLR) contributes to the substrate binding site. Residues Asn-446 and Asn-506 are each glycosylated (N-linked (GlcNAc...) asparagine). Residues 498–572 (ESRKLGKKNK…EPELEAMLSD (75 aa)) form a disordered region. A compositionally biased stretch (acidic residues) spans 521–541 (DQTEEDDPDWSEPDYEEEQSD). Asn-549 carries N-linked (GlcNAc...) asparagine glycosylation. Over residues 554–566 (DYDDPSTSDEPEL) the composition is skewed to acidic residues.

Belongs to the glycosyltransferase GT106 family.

It localises to the membrane. Its pathway is glycan metabolism. The protein is O-fucosyltransferase 16 of Arabidopsis thaliana (Mouse-ear cress).